The chain runs to 240 residues: Adenylate dimethylallyltransferase (240 aa).

It belongs to the isopentenyl transferase family.

The catalysed reaction is dimethylallyl diphosphate + AMP = N(6)-(dimethylallyl)adenosine 5'-phosphate + diphosphate. In terms of biological role, transfers dimethylallyl groups to AMP as part of the biosynthesis of cytokinin phytohormones. This chain is Adenylate dimethylallyltransferase (izt), found in Agrobacterium tumefaciens (strain Ach5).